The chain runs to 388 residues: Dual-specificity RNA methyltransferase RlmN (388 aa).

Glu109 serves as the catalytic Proton acceptor. The region spanning 115–354 is the Radical SAM core domain; that stretch reads EDDRATLCVS…TIVRKTRGDD (240 aa). Cysteines 122 and 359 form a disulfide. Residues Cys129, Cys133, and Cys136 each contribute to the [4Fe-4S] cluster site. Residues 183-184, Ser215, 237-239, and Asn316 each bind S-adenosyl-L-methionine; these read GE and SLH. Cys359 functions as the S-methylcysteine intermediate in the catalytic mechanism.

Belongs to the radical SAM superfamily. RlmN family. It depends on [4Fe-4S] cluster as a cofactor.

Its subcellular location is the cytoplasm. It catalyses the reaction adenosine(2503) in 23S rRNA + 2 reduced [2Fe-2S]-[ferredoxin] + 2 S-adenosyl-L-methionine = 2-methyladenosine(2503) in 23S rRNA + 5'-deoxyadenosine + L-methionine + 2 oxidized [2Fe-2S]-[ferredoxin] + S-adenosyl-L-homocysteine. The catalysed reaction is adenosine(37) in tRNA + 2 reduced [2Fe-2S]-[ferredoxin] + 2 S-adenosyl-L-methionine = 2-methyladenosine(37) in tRNA + 5'-deoxyadenosine + L-methionine + 2 oxidized [2Fe-2S]-[ferredoxin] + S-adenosyl-L-homocysteine. Its function is as follows. Specifically methylates position 2 of adenine 2503 in 23S rRNA and position 2 of adenine 37 in tRNAs. m2A2503 modification seems to play a crucial role in the proofreading step occurring at the peptidyl transferase center and thus would serve to optimize ribosomal fidelity. In Salmonella typhimurium (strain LT2 / SGSC1412 / ATCC 700720), this protein is Dual-specificity RNA methyltransferase RlmN.